The chain runs to 362 residues: Biotin synthase (362 aa).

The Radical SAM core domain maps to 70-305 (CCGNVVDLCS…QQIIRYAGGR (236 aa)). Cysteine 88, cysteine 92, and cysteine 95 together coordinate [4Fe-4S] cluster. The [2Fe-2S] cluster site is built by cysteine 133, cysteine 170, cysteine 230, and arginine 300.

The protein belongs to the radical SAM superfamily. Biotin synthase family. In terms of assembly, homodimer. [4Fe-4S] cluster is required as a cofactor. Requires [2Fe-2S] cluster as cofactor.

It carries out the reaction (4R,5S)-dethiobiotin + (sulfur carrier)-SH + 2 reduced [2Fe-2S]-[ferredoxin] + 2 S-adenosyl-L-methionine = (sulfur carrier)-H + biotin + 2 5'-deoxyadenosine + 2 L-methionine + 2 oxidized [2Fe-2S]-[ferredoxin]. It participates in cofactor biosynthesis; biotin biosynthesis; biotin from 7,8-diaminononanoate: step 2/2. In terms of biological role, catalyzes the conversion of dethiobiotin (DTB) to biotin by the insertion of a sulfur atom into dethiobiotin via a radical-based mechanism. This chain is Biotin synthase, found in Synechocystis sp. (strain ATCC 27184 / PCC 6803 / Kazusa).